The chain runs to 163 residues: Intron-encoded endonuclease I-PpoI (163 aa).

As to quaternary structure, homodimer. The cofactor is Zn(2+).

Functionally, mediates the homing of a group I intron in the ribosomal DNA. Makes a four-base staggered cut in its ribosomal DNA target sequence. In Physarum polycephalum (Slime mold), this protein is Intron-encoded endonuclease I-PpoI.